We begin with the raw amino-acid sequence, 332 residues long: Endo-1,4-beta-xylanase (332 aa).

The N-terminal stretch at 1 to 21 (MLSSTTLLAILSALALTSVQA) is a signal peptide. The 291-residue stretch at 26–316 (KNSLDYLANK…KSTYYVVQQA (291 aa)) folds into the GH10 domain. Glu-120 acts as the Proton donor in catalysis. Cys-128 and Cys-160 are disulfide-bonded. Residue Glu-214 is the Nucleophile of the active site. Cys-247 and Cys-253 are oxidised to a cystine.

It belongs to the glycosyl hydrolase 10 (cellulase F) family.

It is found in the secreted. The enzyme catalyses Endohydrolysis of (1-&gt;4)-beta-D-xylosidic linkages in xylans.. In terms of biological role, requires at least three xylose residues for catalytic activity. Does not have activity against xylobiose. The protein is Endo-1,4-beta-xylanase of Naganishia albida (Cryptococcus albidus).